A 215-amino-acid chain; its full sequence is uncharacterized protein (215 aa).

A signal peptide spans 1–29 (MDKVQSGFLILFLFLMECQLHLCLPYADG). Over 30-100 (LHPTGNITGL…IIRHRPALVK (71 aa)) the chain is Extracellular. A helical transmembrane segment spans residues 101–121 (VILISSVAFSIALICGMAISY). The Cytoplasmic portion of the chain corresponds to 122-215 (MIYRLAQAEE…ASHNGKMEDL (94 aa)). The tract at residues 191 to 215 (LKEEQNSVTENKTKNASHNGKMEDL) is disordered. The segment covering 196–208 (NSVTENKTKNASH) has biased composition (polar residues).

It is found in the membrane. This is an uncharacterized protein from Homo sapiens (Human).